A 921-amino-acid chain; its full sequence is Inter-alpha-trypsin inhibitor heavy chain H4 (921 aa).

Positions 1 to 27 are cleaved as a signal peptide; sequence MKTLSPTGYGLLLVLPLLLAVLQSTTA. One can recognise a VIT domain in the interval 28 to 146; the sequence is HKNDINIYSL…KVTFELVYEE (119 aa). N-linked (GlcNAc...) asparagine glycosylation is found at N80, N205, and N242. Positions 270-428 constitute a VWFA domain; it reads PKNVIFVIDT…YAFLEKMALE (159 aa). Residues N513 and N577 are each glycosylated (N-linked (GlcNAc...) asparagine). The disordered stretch occupies residues 591-646; sequence KPEGQEQSQVAEKPVENGNRQGNTHSGHSSFQFHSVGDRTSRLTGGSSVDPVFSHR. The span at 608–623 shows a compositional bias: polar residues; sequence GNRQGNTHSGHSSFQF. Residue T712 is glycosylated (O-linked (GalNAc...) threonine). A disulfide bridge links C738 with C916.

It belongs to the ITIH family. In terms of assembly, interacts (via C-terminus) with DNAJC1 (via SANT 2 domain). Appears to be both N- and O-glycosylated. In terms of processing, cleaved by plasma kallikrein to yield 55- and 25-kDa fragments. In terms of tissue distribution, liver specific.

Its subcellular location is the secreted. Its function is as follows. Type II acute-phase protein (APP) involved in inflammatory responses to trauma. May also play a role in liver development or regeneration. The protein is Inter-alpha-trypsin inhibitor heavy chain H4 (ITIH4) of Sus scrofa (Pig).